Consider the following 92-residue polypeptide: Small ribosomal subunit protein bS20 (92 aa).

It belongs to the bacterial ribosomal protein bS20 family.

Its function is as follows. Binds directly to 16S ribosomal RNA. In Persephonella marina (strain DSM 14350 / EX-H1), this protein is Small ribosomal subunit protein bS20.